The following is a 214-amino-acid chain: Adenylate kinase (214 aa).

ATP is bound at residue 10–15; sequence GAGKGT. Positions 30 to 59 are NMP; that stretch reads STGDMLRAAVKAGSELGLKAKEIMDAGKLV. AMP is bound by residues T31, R36, 57 to 59, 85 to 88, and Q92; these read KLV and GFPR. An LID region spans residues 122-159; the sequence is GRRVHAPSGRVYHVTFNPPRVEGKDDMTGEELTTRKDD. Residues R123 and 132–133 each bind ATP; that span reads VY. Residues R156 and R167 each coordinate AMP. An ATP-binding site is contributed by R200.

The protein belongs to the adenylate kinase family. In terms of assembly, monomer.

It localises to the cytoplasm. The enzyme catalyses AMP + ATP = 2 ADP. It participates in purine metabolism; AMP biosynthesis via salvage pathway; AMP from ADP: step 1/1. Catalyzes the reversible transfer of the terminal phosphate group between ATP and AMP. Plays an important role in cellular energy homeostasis and in adenine nucleotide metabolism. The chain is Adenylate kinase from Erwinia tasmaniensis (strain DSM 17950 / CFBP 7177 / CIP 109463 / NCPPB 4357 / Et1/99).